The chain runs to 690 residues: Elongation factor G (690 aa).

The region spanning 8–283 (EDYRNFGIMA…AVVAYLPSPL (276 aa)) is the tr-type G domain. Residues 17–24 (AHIDAGKT), 81–85 (DTPGH), and 135–138 (NKMD) contribute to the GTP site.

It belongs to the TRAFAC class translation factor GTPase superfamily. Classic translation factor GTPase family. EF-G/EF-2 subfamily.

The protein resides in the cytoplasm. Catalyzes the GTP-dependent ribosomal translocation step during translation elongation. During this step, the ribosome changes from the pre-translocational (PRE) to the post-translocational (POST) state as the newly formed A-site-bound peptidyl-tRNA and P-site-bound deacylated tRNA move to the P and E sites, respectively. Catalyzes the coordinated movement of the two tRNA molecules, the mRNA and conformational changes in the ribosome. This is Elongation factor G from Nitrobacter winogradskyi (strain ATCC 25391 / DSM 10237 / CIP 104748 / NCIMB 11846 / Nb-255).